Reading from the N-terminus, the 167-residue chain is Leukotoxin-activating lysine-acyltransferase LktC serotype A11 (167 aa).

Residues His-22 and Asp-91 contribute to the active site.

This sequence belongs to the RTX toxin acyltransferase family.

The protein localises to the cytoplasm. The enzyme catalyses a fatty acyl-[ACP] + L-lysyl-[protein] = N(6)-(fatty acyl)-L-lysyl-[protein] + holo-[ACP] + H(+). In terms of biological role, involved in fatty acylation of the protoxin (LktA) at two internal lysine residues, thereby converting it to the active toxin. The chain is Leukotoxin-activating lysine-acyltransferase LktC serotype A11 (lktC) from Mannheimia haemolytica (Pasteurella haemolytica).